The sequence spans 274 residues: NH(3)-dependent NAD(+) synthetase (274 aa).

Position 46 to 53 (46 to 53 (GISGGQDS)) interacts with ATP. Asp52 serves as a coordination point for Mg(2+). Position 140 (Arg140) interacts with deamido-NAD(+). Thr160 contacts ATP. Glu165 lines the Mg(2+) pocket. Positions 173 and 180 each coordinate deamido-NAD(+). ATP is bound by residues Lys189 and Thr211. 260–261 (HK) is a deamido-NAD(+) binding site.

Belongs to the NAD synthetase family. As to quaternary structure, homodimer.

The catalysed reaction is deamido-NAD(+) + NH4(+) + ATP = AMP + diphosphate + NAD(+) + H(+). Its pathway is cofactor biosynthesis; NAD(+) biosynthesis; NAD(+) from deamido-NAD(+) (ammonia route): step 1/1. Catalyzes the ATP-dependent amidation of deamido-NAD to form NAD. Uses ammonia as a nitrogen source. The sequence is that of NH(3)-dependent NAD(+) synthetase from Lactococcus lactis subsp. cremoris (strain SK11).